The sequence spans 111 residues: Large ribosomal subunit protein uL22 (111 aa).

Belongs to the universal ribosomal protein uL22 family. In terms of assembly, part of the 50S ribosomal subunit.

Functionally, this protein binds specifically to 23S rRNA; its binding is stimulated by other ribosomal proteins, e.g. L4, L17, and L20. It is important during the early stages of 50S assembly. It makes multiple contacts with different domains of the 23S rRNA in the assembled 50S subunit and ribosome. Its function is as follows. The globular domain of the protein is located near the polypeptide exit tunnel on the outside of the subunit, while an extended beta-hairpin is found that lines the wall of the exit tunnel in the center of the 70S ribosome. The protein is Large ribosomal subunit protein uL22 of Geotalea daltonii (strain DSM 22248 / JCM 15807 / FRC-32) (Geobacter daltonii).